A 413-amino-acid chain; its full sequence is ATP phosphoribosyltransferase 2, chloroplastic (413 aa).

The N-terminal 57 residues, 1 to 57 (MPISIPLNATLQYSSPSSSSSSSSLVPSSPLFSPIPSTTVSLTGIRQRCLRMVTSCV), are a transit peptide targeting the chloroplast.

Belongs to the ATP phosphoribosyltransferase family. Long subfamily. The cofactor is Mg(2+).

The protein localises to the plastid. It localises to the chloroplast. The catalysed reaction is 1-(5-phospho-beta-D-ribosyl)-ATP + diphosphate = 5-phospho-alpha-D-ribose 1-diphosphate + ATP. The protein operates within amino-acid biosynthesis; L-histidine biosynthesis; L-histidine from 5-phospho-alpha-D-ribose 1-diphosphate: step 1/9. Feedback inhibited by L-histidine. Its function is as follows. Catalyzes the condensation of ATP and 5-phosphoribose 1-diphosphate to form N'-(5'-phosphoribosyl)-ATP (PR-ATP). The sequence is that of ATP phosphoribosyltransferase 2, chloroplastic (HISN1B) from Arabidopsis thaliana (Mouse-ear cress).